The primary structure comprises 140 residues: Large ribosomal subunit protein uL11 (140 aa).

This sequence belongs to the universal ribosomal protein uL11 family. In terms of assembly, part of the ribosomal stalk of the 50S ribosomal subunit. Interacts with L10 and the large rRNA to form the base of the stalk. L10 forms an elongated spine to which L12 dimers bind in a sequential fashion forming a multimeric L10(L12)X complex. Post-translationally, one or more lysine residues are methylated.

Functionally, forms part of the ribosomal stalk which helps the ribosome interact with GTP-bound translation factors. The protein is Large ribosomal subunit protein uL11 of Staphylococcus carnosus (strain TM300).